Here is a 299-residue protein sequence, read N- to C-terminus: Homoserine O-acetyltransferase (299 aa).

The active-site Acyl-thioester intermediate is the Cys-142. Residues Lys-163 and Ser-192 each contribute to the substrate site. Catalysis depends on His-235, which acts as the Proton acceptor. Glu-237 is a catalytic residue. A substrate-binding site is contributed by Arg-249.

Belongs to the MetA family.

Its subcellular location is the cytoplasm. It catalyses the reaction L-homoserine + acetyl-CoA = O-acetyl-L-homoserine + CoA. The protein operates within amino-acid biosynthesis; L-methionine biosynthesis via de novo pathway; O-acetyl-L-homoserine from L-homoserine: step 1/1. Transfers an acetyl group from acetyl-CoA to L-homoserine, forming acetyl-L-homoserine. This Synechococcus sp. (strain ATCC 27144 / PCC 6301 / SAUG 1402/1) (Anacystis nidulans) protein is Homoserine O-acetyltransferase.